Here is a 191-residue protein sequence, read N- to C-terminus: Phosphoheptose isomerase (191 aa).

The region spanning 34-191 (IATALKDGNK…LVEEMVCERS (158 aa)) is the SIS domain. 49 to 51 (NGG) lines the substrate pocket. 2 residues coordinate Zn(2+): His-58 and Glu-62. Substrate is bound by residues Glu-62, 91-92 (ND), 117-119 (TTS), Ser-122, and Gln-169. Residues Gln-169 and His-177 each contribute to the Zn(2+) site.

Belongs to the SIS family. GmhA subfamily. It depends on Zn(2+) as a cofactor.

The protein resides in the cytoplasm. It carries out the reaction 2 D-sedoheptulose 7-phosphate = D-glycero-alpha-D-manno-heptose 7-phosphate + D-glycero-beta-D-manno-heptose 7-phosphate. Its pathway is carbohydrate biosynthesis; D-glycero-D-manno-heptose 7-phosphate biosynthesis; D-glycero-alpha-D-manno-heptose 7-phosphate and D-glycero-beta-D-manno-heptose 7-phosphate from sedoheptulose 7-phosphate: step 1/1. In terms of biological role, catalyzes the isomerization of sedoheptulose 7-phosphate in D-glycero-D-manno-heptose 7-phosphate. This is Phosphoheptose isomerase from Aquifex aeolicus (strain VF5).